The primary structure comprises 247 residues: Uridylate kinase (247 aa).

19-22 (KISG) is a binding site for ATP. G61 provides a ligand contact to UMP. Positions 62 and 66 each coordinate ATP. UMP is bound by residues D81 and 142 to 149 (TGNPFFTT). ATP is bound by residues T169, Q170, Y175, and D178.

It belongs to the UMP kinase family. As to quaternary structure, homohexamer.

It is found in the cytoplasm. It carries out the reaction UMP + ATP = UDP + ADP. The protein operates within pyrimidine metabolism; CTP biosynthesis via de novo pathway; UDP from UMP (UMPK route): step 1/1. With respect to regulation, inhibited by UTP. Catalyzes the reversible phosphorylation of UMP to UDP. This chain is Uridylate kinase, found in Wolbachia pipientis wMel.